We begin with the raw amino-acid sequence, 284 residues long: uncharacterized protein (284 aa).

Residues 1–27 show a composition bias toward polar residues; that stretch reads MSNLPTSTPVSPSNLAEENPKSNNPES. Disordered stretches follow at residues 1–29 and 248–284; these read MSNL…ESSE and TRDS…LKKK.

This is an uncharacterized protein from Caenorhabditis elegans.